We begin with the raw amino-acid sequence, 381 residues long: Cytochrome b (381 aa).

The next 4 helical transmembrane spans lie at 34–54, 78–99, 114–134, and 179–199; these read FGSL…FLAM, WLIR…YLHI, WNIG…GYVL, and FFAF…IHLL. Heme b-binding residues include His-84 and His-98. 2 residues coordinate heme b: His-183 and His-197. His-202 contributes to the a ubiquinone binding site. 4 helical membrane passes run 227–247, 289–309, 321–341, and 348–368; these read YKDI…TLFI, LGGV…PLLQ, MTQI…WIGG, and FIMV…IIIP.

It belongs to the cytochrome b family. The cytochrome bc1 complex contains 3 respiratory subunits (MT-CYB, CYC1 and UQCRFS1), 2 core proteins (UQCRC1 and UQCRC2) and probably 6 low-molecular weight proteins. Heme b serves as cofactor.

The protein resides in the mitochondrion inner membrane. Functionally, component of the ubiquinol-cytochrome c reductase complex (complex III or cytochrome b-c1 complex) that is part of the mitochondrial respiratory chain. The b-c1 complex mediates electron transfer from ubiquinol to cytochrome c. Contributes to the generation of a proton gradient across the mitochondrial membrane that is then used for ATP synthesis. The polypeptide is Cytochrome b (mt-cyb) (Galeocerdo cuvier (Tiger shark)).